Reading from the N-terminus, the 306-residue chain is Curved DNA-binding protein (306 aa).

Residues 5–69 enclose the J domain; that stretch reads DYYAIMGVKP…QRRAEYDQMW (65 aa).

Its subcellular location is the cytoplasm. It localises to the nucleoid. Its function is as follows. DNA-binding protein that preferentially recognizes a curved DNA sequence. It is probably a functional analog of DnaJ; displays overlapping activities with DnaJ, but functions under different conditions, probably acting as a molecular chaperone in an adaptive response to environmental stresses other than heat shock. Lacks autonomous chaperone activity; binds native substrates and targets them for recognition by DnaK. Its activity is inhibited by the binding of CbpM. The protein is Curved DNA-binding protein of Escherichia coli O157:H7.